The primary structure comprises 88 residues: Small ribosomal subunit protein bS20 (88 aa).

Belongs to the bacterial ribosomal protein bS20 family.

In terms of biological role, binds directly to 16S ribosomal RNA. The sequence is that of Small ribosomal subunit protein bS20 from Clostridioides difficile (strain 630) (Peptoclostridium difficile).